The following is a 331-amino-acid chain: Phospho-N-acetylmuramoyl-pentapeptide-transferase (331 aa).

Helical transmembrane passes span 7 to 27 (IIYT…LTIP), 54 to 74 (TIGG…SGLI), 78 to 98 (LWIA…DDFI), 106 to 126 (LGLR…ILAI), 133 to 153 (IMGT…AGFT), 154 to 174 (ITQT…VVVA), 195 to 215 (IIAA…LAIF), 249 to 269 (AIAT…VGGI), and 311 to 331 (VVIV…LALS).

This sequence belongs to the glycosyltransferase 4 family. MraY subfamily. Mg(2+) serves as cofactor.

It is found in the cell membrane. It catalyses the reaction UDP-N-acetyl-alpha-D-muramoyl-L-alanyl-gamma-D-glutamyl-meso-2,6-diaminopimeloyl-D-alanyl-D-alanine + di-trans,octa-cis-undecaprenyl phosphate = di-trans,octa-cis-undecaprenyl diphospho-N-acetyl-alpha-D-muramoyl-L-alanyl-D-glutamyl-meso-2,6-diaminopimeloyl-D-alanyl-D-alanine + UMP. It functions in the pathway cell wall biogenesis; peptidoglycan biosynthesis. Functionally, catalyzes the initial step of the lipid cycle reactions in the biosynthesis of the cell wall peptidoglycan: transfers peptidoglycan precursor phospho-MurNAc-pentapeptide from UDP-MurNAc-pentapeptide onto the lipid carrier undecaprenyl phosphate, yielding undecaprenyl-pyrophosphoryl-MurNAc-pentapeptide, known as lipid I. The polypeptide is Phospho-N-acetylmuramoyl-pentapeptide-transferase (Alkaliphilus metalliredigens (strain QYMF)).